The chain runs to 366 residues: UPF0324 membrane protein RSc1111 (366 aa).

Transmembrane regions (helical) follow at residues leucine 21 to alanine 43, leucine 103 to valine 125, alanine 137 to valine 159, alanine 169 to alanine 191, valine 198 to alanine 220, valine 240 to glutamate 262, tryptophan 283 to histidine 305, and alanine 343 to alanine 365.

This sequence belongs to the UPF0324 family.

The protein localises to the cell membrane. The polypeptide is UPF0324 membrane protein RSc1111 (Ralstonia nicotianae (strain ATCC BAA-1114 / GMI1000) (Ralstonia solanacearum)).